The sequence spans 231 residues: NAD(+) ADP-ribosyltransferase (231 aa).

It catalyses the reaction NAD(+) + (ADP-D-ribosyl)n-acceptor = nicotinamide + (ADP-D-ribosyl)n+1-acceptor + H(+).. With respect to regulation, activity increases up to 5-6 times with Mg(2+) at 50 uM or higher ion concentration. 3-aminobenzamide (3-ABA) inhibits the activity by up to half and nicotinamide to a lesser extent. Zn(2+) inhibits the activity to half-maximal rate but at 500 uM concentration of the ion. Functionally, catalyzes auto- and hetero-ADP ribosylation and produces short oligomers by elongating the ADP-ribose chain (up to 6-mer). Binds DNA non-specifically but with high affinity. Forms very stable complexes with circular DNA wherein the circular DNA confers thermostability compared to linear DNA. The sequence is that of NAD(+) ADP-ribosyltransferase from Saccharolobus solfataricus (Sulfolobus solfataricus).